A 212-amino-acid chain; its full sequence is MRVSSRKGESLAHLLKQEGIVNASVLNAVACTPRELFLPDALRHKAYQNTALPIGQGQTISQPYIVAKMTELLLASSNAPKAVLEIGTGSGYQTAILAQLFDKVFSVERIKSLQFQAKRRMNQLDLHNVSMKHGDGWQGWSSKGPFDAIIVTAAASQVPAKLVEQLNDGGRLIIPVGEQSQQLHCITRVGEGFNEQIIEAVRFVPLVAGDII.

Ser61 is an active-site residue.

The protein belongs to the methyltransferase superfamily. L-isoaspartyl/D-aspartyl protein methyltransferase family.

The protein resides in the cytoplasm. The catalysed reaction is [protein]-L-isoaspartate + S-adenosyl-L-methionine = [protein]-L-isoaspartate alpha-methyl ester + S-adenosyl-L-homocysteine. In terms of biological role, catalyzes the methyl esterification of L-isoaspartyl residues in peptides and proteins that result from spontaneous decomposition of normal L-aspartyl and L-asparaginyl residues. It plays a role in the repair and/or degradation of damaged proteins. This chain is Protein-L-isoaspartate O-methyltransferase, found in Pseudoalteromonas atlantica (strain T6c / ATCC BAA-1087).